A 181-amino-acid polypeptide reads, in one-letter code: MDDLTAQALKDFTARYCDAWHEEHKSWPLSEELYGVPSPCIISTTEDAVYWQPQPFTGEQNVNAVERAFDIVIQPTIHTFYTTQFAGDMHAQFGDIKLTLLQTWSEDDFRRVQENLIGHLVTQKRLKLPPTLFIATLEEELEVISVCNLSGEVCKETLGTRKRTHLASNLAEFLNQLKPLL.

This sequence belongs to the Syd family.

Its subcellular location is the cell inner membrane. Functionally, interacts with the SecY protein in vivo. May bind preferentially to an uncomplexed state of SecY, thus functioning either as a chelating agent for excess SecY in the cell or as a regulatory factor that negatively controls the translocase function. The polypeptide is Protein Syd (Escherichia coli (strain K12 / DH10B)).